The sequence spans 35 residues: Photosystem II reaction center protein T (35 aa).

A helical transmembrane segment spans residues 3–23; it reads ALVYTFLLVSTLGIIFFAIFF.

This sequence belongs to the PsbT family. In terms of assembly, PSII is composed of 1 copy each of membrane proteins PsbA, PsbB, PsbC, PsbD, PsbE, PsbF, PsbH, PsbI, PsbJ, PsbK, PsbL, PsbM, PsbT, PsbY, PsbZ, Psb30/Ycf12, at least 3 peripheral proteins of the oxygen-evolving complex and a large number of cofactors. It forms dimeric complexes.

It localises to the plastid. The protein resides in the chloroplast thylakoid membrane. Functionally, found at the monomer-monomer interface of the photosystem II (PS II) dimer, plays a role in assembly and dimerization of PSII. PSII is a light-driven water plastoquinone oxidoreductase, using light energy to abstract electrons from H(2)O, generating a proton gradient subsequently used for ATP formation. This chain is Photosystem II reaction center protein T, found in Saururus cernuus (Lizard's tail).